A 127-amino-acid chain; its full sequence is Translation initiation factor 5A (127 aa).

A Hypusine modification is found at lysine 35.

It belongs to the eIF-5A family.

The protein localises to the cytoplasm. Functions by promoting the formation of the first peptide bond. In Methanothrix thermoacetophila (strain DSM 6194 / JCM 14653 / NBRC 101360 / PT) (Methanosaeta thermophila), this protein is Translation initiation factor 5A (eIF5A).